We begin with the raw amino-acid sequence, 1032 residues long: Toll-like receptor 9 (1032 aa).

An N-terminal signal peptide occupies residues 1-25; the sequence is MGPCRGALHPLSLLVQAAALALALA. Residues 26–815 lie on the Extracellular side of the membrane; that stretch reads QGTLPAFLPC…QDLRLCLDEA (790 aa). An intrachain disulfide couples cysteine 35 to cysteine 45. 47 to 51 is a DNA binding site; the sequence is WLFLK. 26 LRR repeats span residues 62 to 85, 87 to 110, 122 to 147, 150 to 166, 167 to 190, 198 to 221, 223 to 242, 243 to 268, 283 to 306, 308 to 332, 333 to 356, 363 to 386, 390 to 413, 415 to 440, 472 to 496, 498 to 521, 522 to 545, 547 to 574, 576 to 600, 602 to 624, 629 to 652, 654 to 677, 678 to 701, 703 to 725, 726 to 749, and 751 to 774; these read RGNV…DFVH, VHLR…HFPC, VPTL…SLVS, LSRT…LAGL, YALR…ALQV, LGNL…LPPS, EYLL…DLAN, LTAL…CREC, LSHL…WFHG, GNLM…AFYG, LARL…HLHL, LLSL…TLQS, LPML…IFGA, PGLR…TGEV, CRTL…MFVR, ARLQ…QFVP, LSNL…SFTE, PRLE…SFVA, LPAL…LRSA, LRAL…LYLR, LRSL…NLDN, PKSL…SLAL, LPKL…SLPN, TQLQ…FFAL, AVRL…WFGS, and AGAL…TFVD. N-linked (GlcNAc...) asparagine glycosylation occurs at asparagine 64. Residues 72-77 and 95-109 contribute to the DNA site; these read SNRIHH and KWNC…MHFP. Cysteine 98 and cysteine 110 are disulfide-bonded. Asparagine 129 carries N-linked (GlcNAc...) asparagine glycosylation. Residues tyrosine 132, arginine 152, and 179–181 each bind DNA; that span reads YYK. Cysteine 178 and cysteine 184 are oxidised to a cystine. N-linked (GlcNAc...) asparagine glycosylation is present at asparagine 200. Tyrosine 208 lines the DNA pocket. Residues asparagine 210 and asparagine 242 are each glycosylated (N-linked (GlcNAc...) asparagine). Disulfide bonds link cysteine 255-cysteine 268 and cysteine 258-cysteine 265. A lipid anchor (S-palmitoyl cysteine) is attached at cysteine 258. Position 262 (arginine 262) interacts with DNA. A lipid anchor (S-palmitoyl cysteine) is attached at cysteine 265. Residue asparagine 340 is glycosylated (N-linked (GlcNAc...) asparagine). An intrachain disulfide couples cysteine 472 to cysteine 502. Residues asparagine 476 and asparagine 515 are each glycosylated (N-linked (GlcNAc...) asparagine). Asparagine 569 carries an N-linked (GlcNAc...) asparagine glycan. Residues asparagine 671, asparagine 696, and asparagine 701 are each glycosylated (N-linked (GlcNAc...) asparagine). Asparagine 733 carries N-linked (GlcNAc...) asparagine glycosylation. 2 disulfides stabilise this stretch: cysteine 766/cysteine 792 and cysteine 768/cysteine 811. Residues 816–836 form a helical membrane-spanning segment; it reads LSWVCFSLSLLAVALSLAVPM. At 837-1032 the chain is on the cytoplasmic side; it reads LHQLCGWDLW…QNFCRGPTTA (196 aa). Residues 868–1013 enclose the TIR domain; that stretch reads LAYDAFVVFD…SFWAQLGTAL (146 aa).

Belongs to the Toll-like receptor family. Monomer and homodimer. Exists as a monomer in the absence of unmethylated cytidine-phosphate-guanosine (CpG) ligand. Proteolytic processing of an insertion loop (Z-loop) is required for homodimerization upon binding to the unmethylated CpG ligand leading to its activation. Interacts with MYD88 via their respective TIR domains. Interacts with BTK. Interacts (via transmembrane domain) with UNC93B1. Interacts with CD300LH; the interaction may promote full activation of TLR9-triggered innate responses. Interacts with CNPY3 and HSP90B1; this interaction is required for proper folding in the endoplasmic reticulum. Interacts with SMPDL3B. Interacts with CD82; this interaction is essential for TLR9-dependent myddosome formation in response to CpG stimulation. Post-translationally, activated by proteolytic cleavage of the flexible loop between repeats LRR14 and LRR15 within the ectodomain. Cleavage requires UNC93B1. Proteolytically processed by first removing the majority of the ectodomain by either asparagine endopeptidase (AEP) or a cathepsin followed by a trimming event that is solely cathepsin mediated and required for optimal receptor signaling. Palmitoylated by ZDHHC3 in the Golgi regulates TLR9 trafficking from the Golgi to endosomes. Depalmitoylation by PPT1 controls the release of TLR9 from UNC93B1 in endosomes.

It localises to the endoplasmic reticulum membrane. The protein resides in the endosome. Its subcellular location is the lysosome. It is found in the cytoplasmic vesicle. The protein localises to the phagosome. In terms of biological role, key component of innate and adaptive immunity. TLRs (Toll-like receptors) control host immune response against pathogens through recognition of molecular patterns specific to microorganisms. TLR9 is a nucleotide-sensing TLR which is activated by unmethylated cytidine-phosphate-guanosine (CpG) dinucleotides. Acts via MYD88 and TRAF6, leading to NF-kappa-B activation, cytokine secretion and the inflammatory response. Upon CpG stimulation, induces B-cell proliferation, activation, survival and antibody production. In Canis lupus familiaris (Dog), this protein is Toll-like receptor 9 (TLR9).